The sequence spans 470 residues: Calmodulin-binding receptor-like cytoplasmic kinase 1 (470 aa).

Disordered regions lie at residues 1–29 (MPMRSKTPTPLRFSNGKHQRDDSEYSWTD) and 65–128 (PTEC…SKSW). Basic and acidic residues predominate over residues 65–82 (PTECRSDPGESSTHDRES). Polar residues-rich tracts occupy residues 83–98 (TLSGWTGYSSPSSFGR) and 108–121 (YRFSGSRFQSPGKD). Residues 147–423 (FSSVHQIGEG…MKGIAEKLWA (277 aa)) form the Protein kinase domain. Residues 153–161 (IGEGGFGTV) and K175 each bind ATP. The interval 162–185 (FKGKLDDGTIVAIKRARKNNYGKS) is caM-binding. Catalysis depends on D273, which acts as the Proton acceptor. Residues S277 and S308 each carry the phosphoserine modification. Position 309 is a phosphothreonine (T309). Y322 is subject to Phosphotyrosine.

Belongs to the protein kinase superfamily. Ser/Thr protein kinase family. In terms of assembly, interacts with calmodulin (CaM) in a Ca(2+)-dependent manner. The cofactor is Mg(2+). Post-translationally, autophosphorylated.

It is found in the cytoplasm. It carries out the reaction L-seryl-[protein] + ATP = O-phospho-L-seryl-[protein] + ADP + H(+). It catalyses the reaction L-threonyl-[protein] + ATP = O-phospho-L-threonyl-[protein] + ADP + H(+). With respect to regulation, up-regulated by Ca(2+)/CaM. This Arabidopsis thaliana (Mouse-ear cress) protein is Calmodulin-binding receptor-like cytoplasmic kinase 1 (CRCK1).